Consider the following 475-residue polypeptide: Exodeoxyribonuclease 7 large subunit (475 aa).

Positions 452–475 (DHGLNRSSKSKRIKSKQDDQGTLF) are disordered. Over residues 466 to 475 (SKQDDQGTLF) the composition is skewed to basic and acidic residues.

Belongs to the XseA family. As to quaternary structure, heterooligomer composed of large and small subunits.

The protein resides in the cytoplasm. The enzyme catalyses Exonucleolytic cleavage in either 5'- to 3'- or 3'- to 5'-direction to yield nucleoside 5'-phosphates.. In terms of biological role, bidirectionally degrades single-stranded DNA into large acid-insoluble oligonucleotides, which are then degraded further into small acid-soluble oligonucleotides. The chain is Exodeoxyribonuclease 7 large subunit from Bartonella quintana (strain Toulouse) (Rochalimaea quintana).